Here is a 185-residue protein sequence, read N- to C-terminus: uncharacterized protein (185 aa).

Residues 1-69 (MSSFIDSIKS…SSDCSRAERT (69 aa)) lie on the Cytoplasmic side of the membrane. Residues 70–90 (FNLILFAIVDLVICCESMAFF) form a helical membrane-spanning segment. Position 91 (N91) is a topological domain, extracellular. Residues 92–112 (LLLKLPSMLLVSFLTMLVFSI) traverse the membrane as a helical segment. Topologically, residues 113–118 (SYSWSA) are cytoplasmic. A helical membrane pass occupies residues 119–139 (FNWISFAFSSASFLMKACILF). Topologically, residues 140-185 (NSSFTWFGVKAVIAEDMLYRMVRGLFCASFVKQLQTTFLATAIVLC) are extracellular.

Its subcellular location is the membrane. This is an uncharacterized protein from Saccharomyces cerevisiae (strain ATCC 204508 / S288c) (Baker's yeast).